We begin with the raw amino-acid sequence, 186 residues long: Peptidoglycan-recognition protein SD (186 aa).

Residues 1-18 (MTWIGLLIVGLTAIAVQG) form the signal peptide. One can recognise an N-acetylmuramoyl-L-alanine amidase domain in the interval 47 to 169 (AVIAHTAGGA…RQVSATMSPG (123 aa)). The cysteines at positions 57 and 63 are disulfide-linked. A glycan (N-linked (GlcNAc...) asparagine) is linked at N181.

It belongs to the N-acetylmuramoyl-L-alanine amidase 2 family.

It is found in the secreted. Its function is as follows. Peptidoglycan-recognition protein that plays a key role in innate immunity by binding to peptidoglycans (PGN) of Gram-positive bacteria and activating the Toll pathway. Has no activity against on Gram-negative bacteria and fungi. Shows some partial redundancy with PRPGP-SA in Gram-positive bacteria recognition. May act by activating the proteolytic cleavage of Spatzle and the subsequent activation of Toll pathway. Recognizes S.aureus PGN. The sequence is that of Peptidoglycan-recognition protein SD (PGRP-SD) from Drosophila simulans (Fruit fly).